A 483-amino-acid chain; its full sequence is NADH-quinone oxidoreductase subunit N (483 aa).

The next 13 helical transmembrane spans lie at 13-33, 45-65, 80-100, 111-131, 165-185, 205-225, 244-264, 276-296, 301-321, 328-348, 373-393, 407-429, and 452-472; these read PALPEILLAVGAMALLMYGVF, GALALFALVGAFLIIEPNAYV, FMKLLILLAAAAAIVMSLTFI, PVLIILATLGMFMMVSANGLI, FVLGALASGMLLYGASLIYGF, IGVIFGIVFVLAGLAFKISAV, AFFAGAPKVAAMALILRVLFV, IIVFIAIASMVLGAFAAIGQS, LMAYSSISHMGFAMVGLAAGT, VLIYLVIYVVMNAGVFCCILA, AFMMAMLMFSLAGVPPLAGFF, LYPLAVIGVLASVVGAFYYLRIV, and VLGISGVFTLFFFVYPAPLIL.

The protein belongs to the complex I subunit 2 family. In terms of assembly, NDH-1 is composed of 14 different subunits. Subunits NuoA, H, J, K, L, M, N constitute the membrane sector of the complex.

It is found in the cell inner membrane. The catalysed reaction is a quinone + NADH + 5 H(+)(in) = a quinol + NAD(+) + 4 H(+)(out). Its function is as follows. NDH-1 shuttles electrons from NADH, via FMN and iron-sulfur (Fe-S) centers, to quinones in the respiratory chain. The immediate electron acceptor for the enzyme in this species is believed to be ubiquinone. Couples the redox reaction to proton translocation (for every two electrons transferred, four hydrogen ions are translocated across the cytoplasmic membrane), and thus conserves the redox energy in a proton gradient. The chain is NADH-quinone oxidoreductase subunit N from Parvibaculum lavamentivorans (strain DS-1 / DSM 13023 / NCIMB 13966).